The following is a 68-amino-acid chain: Sec-independent protein translocase protein TatA (68 aa).

The chain crosses the membrane as a helical span at residues 1–21 (MGSLSIWHWLIVLLIVVLVFG). Positions 42–68 (GMNEGAKDGQPPAKDAGRIIDGEADKK) are disordered. Residues 56 to 68 (DAGRIIDGEADKK) are compositionally biased toward basic and acidic residues.

Belongs to the TatA/E family. In terms of assembly, the Tat system comprises two distinct complexes: a TatABC complex, containing multiple copies of TatA, TatB and TatC subunits, and a separate TatA complex, containing only TatA subunits. Substrates initially bind to the TatABC complex, which probably triggers association of the separate TatA complex to form the active translocon.

Its subcellular location is the cell inner membrane. Functionally, part of the twin-arginine translocation (Tat) system that transports large folded proteins containing a characteristic twin-arginine motif in their signal peptide across membranes. TatA could form the protein-conducting channel of the Tat system. The protein is Sec-independent protein translocase protein TatA of Chromobacterium violaceum (strain ATCC 12472 / DSM 30191 / JCM 1249 / CCUG 213 / NBRC 12614 / NCIMB 9131 / NCTC 9757 / MK).